Here is a 490-residue protein sequence, read N- to C-terminus: Cobyric acid synthase (490 aa).

A GATase cobBQ-type domain is found at 253–440 (KLRVAAPAAP…LHGVFDEPAA (188 aa)). The active-site Nucleophile is the Cys334. His432 is an active-site residue.

Belongs to the CobB/CobQ family. CobQ subfamily.

It functions in the pathway cofactor biosynthesis; adenosylcobalamin biosynthesis. In terms of biological role, catalyzes amidations at positions B, D, E, and G on adenosylcobyrinic A,C-diamide. NH(2) groups are provided by glutamine, and one molecule of ATP is hydrogenolyzed for each amidation. The protein is Cobyric acid synthase of Chromobacterium violaceum (strain ATCC 12472 / DSM 30191 / JCM 1249 / CCUG 213 / NBRC 12614 / NCIMB 9131 / NCTC 9757 / MK).